The sequence spans 431 residues: Tol-Pal system protein TolB (431 aa).

The signal sequence occupies residues 1–26 (MSLMTKLGFRALVASCLIAAGGAANA). Residues 411-431 (PQILSVQGGSVREPSWGPFMQ) are disordered.

This sequence belongs to the TolB family. In terms of assembly, the Tol-Pal system is composed of five core proteins: the inner membrane proteins TolA, TolQ and TolR, the periplasmic protein TolB and the outer membrane protein Pal. They form a network linking the inner and outer membranes and the peptidoglycan layer.

Its subcellular location is the periplasm. Part of the Tol-Pal system, which plays a role in outer membrane invagination during cell division and is important for maintaining outer membrane integrity. This is Tol-Pal system protein TolB from Burkholderia vietnamiensis (strain G4 / LMG 22486) (Burkholderia cepacia (strain R1808)).